Reading from the N-terminus, the 195-residue chain is Imidazoleglycerol-phosphate dehydratase (195 aa).

This sequence belongs to the imidazoleglycerol-phosphate dehydratase family.

It is found in the cytoplasm. It catalyses the reaction D-erythro-1-(imidazol-4-yl)glycerol 3-phosphate = 3-(imidazol-4-yl)-2-oxopropyl phosphate + H2O. It participates in amino-acid biosynthesis; L-histidine biosynthesis; L-histidine from 5-phospho-alpha-D-ribose 1-diphosphate: step 6/9. In Burkholderia lata (strain ATCC 17760 / DSM 23089 / LMG 22485 / NCIMB 9086 / R18194 / 383), this protein is Imidazoleglycerol-phosphate dehydratase.